Consider the following 146-residue polypeptide: Phospholipase A2 (146 aa).

Positions 1 to 18 (MAFLVFAFLTLMAVETYG) are cleaved as a signal peptide. Cystine bridges form between Cys44–Cys137, Cys46–Cys62, Cys61–Cys117, Cys67–Cys144, Cys68–Cys110, Cys77–Cys103, and Cys95–Cys108. 3 residues coordinate Ca(2+): Tyr45, Gly47, and Gly49. The active site involves His65. Asp66 is a binding site for Ca(2+). N-linked (GlcNAc...) asparagine glycosylation occurs at Asn85. The active site involves Asp111. The N-linked (GlcNAc...) asparagine glycan is linked to Asn126.

It depends on Ca(2+) as a cofactor. Post-translationally, N-glycosylated. Glycosylated with mannose chains including Man2(GlcNAc), Man2(GlcNAc)2, Man2(GlcNAc)3, Man2(GlcNAc)4 and Man2(GlcNAc)5. In terms of tissue distribution, expressed by the skin glands (at protein level).

The protein localises to the secreted. It carries out the reaction a 1,2-diacyl-sn-glycero-3-phosphocholine + H2O = a 1-acyl-sn-glycero-3-phosphocholine + a fatty acid + H(+). PLA2 catalyzes the calcium-dependent hydrolysis of the 2-acyl groups in 3-sn-phosphoglycerides. The sequence is that of Phospholipase A2 from Pithecopus azureus (Orange-legged monkey tree frog).